The following is a 455-amino-acid chain: Killer cell immunoglobulin-like receptor 3DL2 (455 aa).

The signal sequence occupies residues 1 to 21 (MSLTVVSMACVGFFLLQGAWP). The Extracellular portion of the chain corresponds to 22 to 340 (LMGGQDKPFL…SKSGICRHLH (319 aa)). Ig-like C2-type domains are found at residues 42–102 (GGHV…RPHS), 137–202 (GETV…VPHS), and 237–300 (GENV…FRAL). 2 disulfides stabilise this stretch: Cys-49–Cys-95 and Cys-144–Cys-195. 4 N-linked (GlcNAc...) asparagine glycosylation sites follow: Asn-179, Asn-239, Asn-273, and Asn-306. An intrachain disulfide couples Cys-244 to Cys-293. Residues 341–360 (VLIGTSVVIFLFILLLFFLL) traverse the membrane as a helical segment. Over 361 to 455 (YRWCSNKKNA…APQSGLEGVF (95 aa)) the chain is Cytoplasmic.

This sequence belongs to the immunoglobulin superfamily. As to quaternary structure, interacts with peptide-free HLA-F open conformer. As to expression, expressed in astrocytes.

It is found in the cell membrane. Its function is as follows. Receptor on natural killer (NK) cells and T cells for MHC class I molecules. Upon binding of peptide-free HLA-F open conformer, negatively regulates NK and T cell effector functions. Acts as a receptor on astrocytes for HLA-F. Through interaction with HLA-F, may protect motor neurons from astrocyte-induced toxicity. This chain is Killer cell immunoglobulin-like receptor 3DL2, found in Homo sapiens (Human).